Here is a 647-residue protein sequence, read N- to C-terminus: tRNA 5-methylaminomethyl-2-thiouridine biosynthesis bifunctional protein MnmC (647 aa).

The tRNA (mnm(5)s(2)U34)-methyltransferase stretch occupies residues 1-235; that stretch reads MSIPPFSQAS…KRDMLCGRFT (235 aa). The tract at residues 250-647 is FAD-dependent cmnm(5)s(2)U34 oxidoreductase; sequence IGGGIAGTAS…RGLACHPLRR (398 aa).

In the N-terminal section; belongs to the methyltransferase superfamily. tRNA (mnm(5)s(2)U34)-methyltransferase family. This sequence in the C-terminal section; belongs to the DAO family. FAD serves as cofactor.

The protein localises to the cytoplasm. The enzyme catalyses 5-aminomethyl-2-thiouridine(34) in tRNA + S-adenosyl-L-methionine = 5-methylaminomethyl-2-thiouridine(34) in tRNA + S-adenosyl-L-homocysteine + H(+). Catalyzes the last two steps in the biosynthesis of 5-methylaminomethyl-2-thiouridine (mnm(5)s(2)U) at the wobble position (U34) in tRNA. Catalyzes the FAD-dependent demodification of cmnm(5)s(2)U34 to nm(5)s(2)U34, followed by the transfer of a methyl group from S-adenosyl-L-methionine to nm(5)s(2)U34, to form mnm(5)s(2)U34. This Methylobacillus flagellatus (strain ATCC 51484 / DSM 6875 / VKM B-1610 / KT) protein is tRNA 5-methylaminomethyl-2-thiouridine biosynthesis bifunctional protein MnmC.